The chain runs to 435 residues: NADH-quinone oxidoreductase subunit D (435 aa).

It belongs to the complex I 49 kDa subunit family. In terms of assembly, NDH-1 is composed of 14 different subunits. Subunits NuoB, C, D, E, F, and G constitute the peripheral sector of the complex.

The protein localises to the cell inner membrane. The catalysed reaction is a quinone + NADH + 5 H(+)(in) = a quinol + NAD(+) + 4 H(+)(out). NDH-1 shuttles electrons from NADH, via FMN and iron-sulfur (Fe-S) centers, to quinones in the respiratory chain. The immediate electron acceptor for the enzyme in this species is believed to be ubiquinone. Couples the redox reaction to proton translocation (for every two electrons transferred, four hydrogen ions are translocated across the cytoplasmic membrane), and thus conserves the redox energy in a proton gradient. The chain is NADH-quinone oxidoreductase subunit D from Xanthomonas euvesicatoria pv. vesicatoria (strain 85-10) (Xanthomonas campestris pv. vesicatoria).